Here is a 412-residue protein sequence, read N- to C-terminus: Gamma-glutamyl phosphate reductase (412 aa).

It belongs to the gamma-glutamyl phosphate reductase family.

Its subcellular location is the cytoplasm. The enzyme catalyses L-glutamate 5-semialdehyde + phosphate + NADP(+) = L-glutamyl 5-phosphate + NADPH + H(+). Its pathway is amino-acid biosynthesis; L-proline biosynthesis; L-glutamate 5-semialdehyde from L-glutamate: step 2/2. Catalyzes the NADPH-dependent reduction of L-glutamate 5-phosphate into L-glutamate 5-semialdehyde and phosphate. The product spontaneously undergoes cyclization to form 1-pyrroline-5-carboxylate. The sequence is that of Gamma-glutamyl phosphate reductase from Aliarcobacter butzleri (strain RM4018) (Arcobacter butzleri).